A 241-amino-acid chain; its full sequence is Probable histone-lysine N-methyltransferase set-23 (241 aa).

The Pre-SET domain occupies 25 to 85; it reads QGCDCETQCS…SCRNKVVQNG (61 aa). 9 residues coordinate Zn(2+): C27, C29, C33, C39, C41, C64, C68, C70, and C77. Residues 88 to 210 form the SET domain; the sequence is KKLKIFSTSE…VGEELSYDYG (123 aa). S-adenosyl-L-methionine-binding positions include 98–100, D138, Y140, R167, and 170–171; these read KGD and NH. Residues C173, C222, C224, and C229 each contribute to the Zn(2+) site. Positions 218-234 constitute a Post-SET domain; that stretch reads NRKLCLCRSENCRKYLP.

It belongs to the class V-like SAM-binding methyltransferase superfamily. Histone-lysine methyltransferase family. Suvar3-9 subfamily.

The protein resides in the nucleus. It localises to the chromosome. It catalyses the reaction L-lysyl-[histone] + S-adenosyl-L-methionine = N(6)-methyl-L-lysyl-[histone] + S-adenosyl-L-homocysteine + H(+). Probable histone methyltransferase required for embryonic development. The polypeptide is Probable histone-lysine N-methyltransferase set-23 (Caenorhabditis briggsae).